Reading from the N-terminus, the 359-residue chain is MTTDLTDRRQLILKLAIQEFIESSQPVASELLVRKYRLNVSPATVRNELAALEELGYLTHLHTSAGRVPTDAGYRYFVENLMDRTPLSATEQRTIRHQFYQVRSELDQWIQLAGAVLARTAQNASVVTPPRAQQARLKHLELISIHDTTALMVLVLHDGTIRQQTLTLDMALSQEELSRRASRINERCADAPVERVEEFLKQERAHEPPGGDALACQVLDLIVKAMHQFNEHLNSDIHSDGLIEILNQPEFSQVERVRRMIEILQSRRALGTLIPRALSSSGVQVVIGGEHSYDEMREYSVVLSRYGGGEIVGVLGVIGPTRMAYPRAISAVRYISAVMSDLLAELYGIEGDTHWEVES.

This sequence belongs to the HrcA family.

Functionally, negative regulator of class I heat shock genes (grpE-dnaK-dnaJ and groELS operons). Prevents heat-shock induction of these operons. This chain is Heat-inducible transcription repressor HrcA, found in Roseiflexus castenholzii (strain DSM 13941 / HLO8).